Consider the following 223-residue polypeptide: Peroxynitrite isomerase 1 (223 aa).

Positions 69–75 (GVWRGEG) match the GXWXGXG motif. Heme b is bound by residues Lys186 and His213.

The protein belongs to the nitrobindin family. Homodimer. Heme b is required as a cofactor.

It carries out the reaction peroxynitrite = nitrate. The protein operates within nitrogen metabolism. Its function is as follows. Heme-binding protein able to scavenge peroxynitrite and to protect free L-tyrosine against peroxynitrite-mediated nitration, by acting as a peroxynitrite isomerase that converts peroxynitrite to nitrate. Therefore, this protein likely plays a role in peroxynitrite sensing and in the detoxification of reactive nitrogen and oxygen species (RNS and ROS, respectively). Is able to bind nitric oxide (NO) in vitro, but may act as a sensor of peroxynitrite levels in vivo. The polypeptide is Peroxynitrite isomerase 1 (Mycobacterium marinum (strain ATCC BAA-535 / M)).